The following is a 122-amino-acid chain: Acidic phospholipase A2 (122 aa).

7 cysteine pairs are disulfide-bonded: C26-C115, C28-C44, C43-C95, C49-C122, C50-C88, C57-C81, and C75-C86. Positions 27, 29, and 31 each coordinate Ca(2+). The active site involves H47. D48 contributes to the Ca(2+) binding site. The active site involves D89.

The protein belongs to the phospholipase A2 family. Group II subfamily. D49 sub-subfamily. In terms of assembly, monomer. Requires Ca(2+) as cofactor. In terms of tissue distribution, expressed by the venom gland.

The protein resides in the secreted. It carries out the reaction a 1,2-diacyl-sn-glycero-3-phosphocholine + H2O = a 1-acyl-sn-glycero-3-phosphocholine + a fatty acid + H(+). Its function is as follows. PLA2 catalyzes the calcium-dependent hydrolysis of the 2-acyl groups in 3-sn-phosphoglycerides. In Gloydius blomhoffii (Mamushi), this protein is Acidic phospholipase A2.